Consider the following 447-residue polypeptide: Protein king tubby (447 aa).

Residues 54–84 are disordered; the sequence is GSPQNPDQILSNNSSSITMNSSRNNSNNMRS. A compositionally biased stretch (low complexity) spans 62 to 84; sequence ILSNNSSSITMNSSRNNSNNMRS. S136 is subject to Phosphoserine. Positions 168 to 182 are enriched in low complexity; the sequence is EGAAMEGSNGAANGS. The tract at residues 168–191 is disordered; sequence EGAAMEGSNGAANGSGSVGGSGES.

Belongs to the TUB family.

It is found in the cytoplasm. It localises to the nucleus. Its subcellular location is the cell projection. The protein localises to the cilium membrane. The protein resides in the rhabdomere. The sequence is that of Protein king tubby from Drosophila grimshawi (Hawaiian fruit fly).